Reading from the N-terminus, the 111-residue chain is Large ribosomal subunit protein uL22 (111 aa).

Belongs to the universal ribosomal protein uL22 family. Part of the 50S ribosomal subunit.

Its function is as follows. This protein binds specifically to 23S rRNA; its binding is stimulated by other ribosomal proteins, e.g. L4, L17, and L20. It is important during the early stages of 50S assembly. It makes multiple contacts with different domains of the 23S rRNA in the assembled 50S subunit and ribosome. Functionally, the globular domain of the protein is located near the polypeptide exit tunnel on the outside of the subunit, while an extended beta-hairpin is found that lines the wall of the exit tunnel in the center of the 70S ribosome. The sequence is that of Large ribosomal subunit protein uL22 from Stenotrophomonas maltophilia (strain R551-3).